The sequence spans 513 residues: tRNA A64-2'-O-ribosylphosphate transferase (513 aa).

Its function is as follows. tRNA backbone modifying enzyme that mediates initiator/ elongator tRNA discrimination. This enzyme modifies exclusively the initiator tRNA in position 64 using 5'-phosphoribosyl-1'-pyrophosphate as the modification donor. Recognize the stem-loop IV region that is unique in eukaryotic cytoplasmic initiator tRNAs. The sequence is that of tRNA A64-2'-O-ribosylphosphate transferase (RIT1) from Saccharomyces cerevisiae (strain ATCC 204508 / S288c) (Baker's yeast).